The following is a 218-amino-acid chain: Small ribosomal subunit protein uS3 (218 aa).

The KH type-2 domain occupies 38 to 106 (IRKYIESKLA…RVHINIVEIK (69 aa)).

This sequence belongs to the universal ribosomal protein uS3 family. In terms of assembly, part of the 30S ribosomal subunit. Forms a tight complex with proteins S10 and S14.

Its function is as follows. Binds the lower part of the 30S subunit head. Binds mRNA in the 70S ribosome, positioning it for translation. This chain is Small ribosomal subunit protein uS3, found in Ligilactobacillus salivarius (strain UCC118) (Lactobacillus salivarius).